A 570-amino-acid polypeptide reads, in one-letter code: Sulfite reductase [NADPH] hemoprotein beta-component (570 aa).

Residues cysteine 434, cysteine 440, cysteine 479, and cysteine 483 each coordinate [4Fe-4S] cluster. Residue cysteine 483 coordinates siroheme.

The protein belongs to the nitrite and sulfite reductase 4Fe-4S domain family. As to quaternary structure, alpha(8)-beta(8). The alpha component is a flavoprotein, the beta component is a hemoprotein. It depends on siroheme as a cofactor. The cofactor is [4Fe-4S] cluster.

It carries out the reaction hydrogen sulfide + 3 NADP(+) + 3 H2O = sulfite + 3 NADPH + 4 H(+). Its pathway is sulfur metabolism; hydrogen sulfide biosynthesis; hydrogen sulfide from sulfite (NADPH route): step 1/1. Its function is as follows. Component of the sulfite reductase complex that catalyzes the 6-electron reduction of sulfite to sulfide. This is one of several activities required for the biosynthesis of L-cysteine from sulfate. The protein is Sulfite reductase [NADPH] hemoprotein beta-component of Salmonella agona (strain SL483).